The sequence spans 60 residues: Insect toxin mu-NPTX-Nc1a (60 aa).

The first 19 residues, 1–19, serve as a signal peptide directing secretion; the sequence is MIYQVVLLLLVSPAPVSAA.

Post-translationally, contains 4 disulfide bonds. As to expression, expressed by the venom gland.

The protein resides in the secreted. Functionally, insect-specific toxin. Blocks voltage-gated potassium and sodium channels. In Trichonephila clavata (Joro spider), this protein is Insect toxin mu-NPTX-Nc1a.